The sequence spans 24 residues: Positive regulator of RepFIC repA1 expression (24 aa).

The polypeptide is Positive regulator of RepFIC repA1 expression (repL) (Escherichia coli (strain K12)).